A 264-amino-acid polypeptide reads, in one-letter code: Galectin-3 (264 aa).

The segment at 1–105 (MADSFSLNDA…GAFPGQPGAP (105 aa)) is disordered. Ala-2 bears the N-acetylalanine mark. Ser-6 carries the phosphoserine; by CK1 modification. A run of 8 repeats spans residues 35–43 (YPGAAYPGA), 44–52 (YPGQAPPGA), 53–61 (YPGQAPPGA), 62–70 (YPGQAPPSA), 71–79 (YPGPTAPGA), 80–88 (YPGPTAPGA), 89–97 (YPGQPAPGA), and 98–107 (FPGQPGAPGA). Residues 35-114 (YPGAAYPGAY…PGAYPQCSGG (80 aa)) are 9 X 9 AA tandem repeats of Y-P-G-X(3)-P-[GS]-A. The segment covering 37-46 (GAAYPGAYPG) has biased composition (low complexity). Residues 47-75 (QAPPGAYPGQAPPGAYPGQAPPSAYPGPT) are compositionally biased toward pro residues. Positions 76–105 (APGAYPGPTAPGAYPGQPAPGAFPGQPGAP) are enriched in low complexity. A 9; truncated repeat occupies 108–114 (YPQCSGG). Residues 132–262 (YDLPLPGGVM…DITLTSANHA (131 aa)) form the Galectin domain. Residue 195–201 (WGKEERQ) participates in a beta-D-galactoside binding. Ser-202 bears the Phosphoserine mark. The Nuclear export signal motif lies at 240–255 (KNLREISQLGISGDIT).

As to quaternary structure, probably forms homo- or heterodimers. Interacts with DMBT1. Interacts with CD6 and ALCAM. Forms a complex with the ITGA3, ITGB1 and CSPG4. Interacts with LGALS3BP, LYPD3, ZFTRAF1 and UACA. Interacts with TRIM16; this interaction mediates autophagy of damage endomembranes. Interacts with and inhibits by binding NCR3/NKp30. In terms of tissue distribution, the highest levels are found in activated macrophages.

Its subcellular location is the cytoplasm. It localises to the nucleus. It is found in the secreted. Galactose-specific lectin which binds IgE. May mediate with the alpha-3, beta-1 integrin the stimulation by CSPG4 of endothelial cells migration. Together with DMBT1, required for terminal differentiation of columnar epithelial cells during early embryogenesis. In the nucleus: acts as a pre-mRNA splicing factor. Involved in acute inflammatory responses including neutrophil activation and adhesion, chemoattraction of monocytes macrophages, opsonization of apoptotic neutrophils, and activation of mast cells. Together with TRIM16, coordinates the recognition of membrane damage with mobilization of the core autophagy regulators ATG16L1 and BECN1 in response to damaged endomembranes. When secreted, interacts with NK cell-activating receptor NCR3/NKp30 acting as an inhibitory ligand which antagonizes NK cell attack. The polypeptide is Galectin-3 (Lgals3) (Mus musculus (Mouse)).